Here is a 329-residue protein sequence, read N- to C-terminus: Flotillin-like protein FloA (329 aa).

2 helical membrane passes run 4 to 24 and 27 to 47; these read FIPF…ILSF and VGLW…TLVG.

The protein belongs to the flotillin-like FloA family. In terms of assembly, homooligomerizes.

The protein resides in the cell membrane. It is found in the membrane raft. Functionally, found in functional membrane microdomains (FMM) that may be equivalent to eukaryotic membrane rafts. FMMs are highly dynamic and increase in number as cells age. Flotillins are thought to be important factors in membrane fluidity. This Alkaliphilus metalliredigens (strain QYMF) protein is Flotillin-like protein FloA.